A 209-amino-acid chain; its full sequence is High frequency lysogenization protein HflD homolog (209 aa).

The stretch at 95-132 (LERKLAASKGAMNTLGNRIADLSRQLEHFELESDTLMS) forms a coiled coil.

It belongs to the HflD family.

The protein resides in the cytoplasm. The protein localises to the cell inner membrane. The sequence is that of High frequency lysogenization protein HflD homolog from Cronobacter sakazakii (strain ATCC BAA-894) (Enterobacter sakazakii).